Consider the following 228-residue polypeptide: ATP synthase subunit a (228 aa).

6 consecutive transmembrane segments (helical) span residues 14–34 (YFLL…WLFF), 71–91 (WVPI…LGLL), 101–121 (ISLT…LGFY), 139–159 (FLLP…PIAL), 165–185 (ANLT…WVLM), and 188–208 (VAIA…EIGV).

The protein belongs to the ATPase A chain family. F-type ATPases have 2 components, CF(1) - the catalytic core - and CF(0) - the membrane proton channel. CF(1) has five subunits: alpha(3), beta(3), gamma(1), delta(1), epsilon(1). CF(0) has three main subunits: a, b and c.

The protein resides in the mitochondrion inner membrane. Its function is as follows. Mitochondrial membrane ATP synthase (F(1)F(0) ATP synthase or Complex V) produces ATP from ADP in the presence of a proton gradient across the membrane which is generated by electron transport complexes of the respiratory chain. F-type ATPases consist of two structural domains, F(1) - containing the extramembraneous catalytic core and F(0) - containing the membrane proton channel, linked together by a central stalk and a peripheral stalk. During catalysis, ATP synthesis in the catalytic domain of F(1) is coupled via a rotary mechanism of the central stalk subunits to proton translocation. Key component of the proton channel; it may play a direct role in the translocation of protons across the membrane. The sequence is that of ATP synthase subunit a (ATP6) from Pisaster ochraceus (Ochre sea star).